Reading from the N-terminus, the 496-residue chain is Sodium/sialic acid symporter SiaT (496 aa).

Topologically, residues 1–7 (MQLHDFG) are periplasmic. A helical membrane pass occupies residues 8 to 29 (FINYAVLFGYLAAMLLVGVYFS). Topologically, residues 30 to 46 (KRQKTADDYFRGGGRVP) are cytoplasmic. A helical membrane pass occupies residues 47-59 (GWAAGVSVFATTL). Ala-56 contacts Na(+). Residue Thr-58 coordinates N-acetyl-alpha-neuraminate. Leu-59 serves as a coordination point for Na(+). Positions 60, 63, and 82 each coordinate N-acetyl-alpha-neuraminate. Residues 60–76 (SSITFMSIPAKAYTSDW) are Periplasmic-facing. A helical membrane pass occupies residues 77-92 (TFIIGQYLAIAILPLV). Residues 93-116 (FYFYIPFFRKLKITSAYEYLEARF) are Cytoplasmic-facing. A helical membrane pass occupies residues 117–144 (DVRSRLFASLSFMLFHIGRVAIITYLTV). Arg-135 lines the N-acetyl-alpha-neuraminate pocket. Over 145-154 (LALRPFMGID) the chain is Periplasmic. Residues 155 to 172 (PVVLIVLISLLCIIYTWM) form a helical membrane-spanning segment. Residues 173–174 (GG) are Cytoplasmic-facing. Residues 175–199 (IEGVIWTDVIQGLLLSGGAVLIFIM) form a helical membrane-spanning segment. Asp-182 is a binding site for Na(+). The Periplasmic portion of the chain corresponds to 200–235 (ICFKVDGGISEIFTTTAQADKFFPTTQWRWSWTDST). A helical transmembrane segment spans residues 236-252 (IPVLMIGFLFANIQQFT). The Cytoplasmic portion of the chain corresponds to 253 to 272 (ASQDVVQRYIVTDSIKETKR). Residues 273–292 (TLITNAKLVAIIPIFFFAIG) form a helical membrane-spanning segment. Residues 293–325 (SALFVYYQQNPSLLPAGFNTGGILPLFIVTEMP) lie on the Periplasmic side of the membrane. Residues 326-356 (IGIAGLIIAAIFAAAQSSISSSLNSISSCFN) form a helical membrane-spanning segment. 5 residues coordinate Na(+): Ala-339, Ser-342, Ser-343, Ser-345, and Ser-346. Residues 357–374 (SDIYTRLSKSSPSPEQKM) are Cytoplasmic-facing. A helical membrane pass occupies residues 375–396 (KVAKLVIIVAGIFSSLAAIWLV). Topologically, residues 397-403 (LSDEAEI) are periplasmic. Residues 404 to 427 (WDAFNSLIGLMGGPMTGLFMLGIF) traverse the membrane as a helical segment. The Cytoplasmic portion of the chain corresponds to 428–432 (VKRAN). The chain crosses the membrane as a helical span at residues 433–453 (AGSAVVGIIVSIIAVLAARYG). At 454-457 (SDLN) the chain is on the periplasmic side. Residues 458-479 (FFFYGVIGSMSVVIAGTITAPL) form a helical membrane-spanning segment. At 480 to 496 (FAPAKQLSLDDSETSEN) the chain is on the cytoplasmic side.

Belongs to the sodium:solute symporter (SSF) (TC 2.A.21) family.

The protein localises to the cell inner membrane. It catalyses the reaction N-acetyl-alpha-neuraminate(out) + 2 Na(+)(out) = N-acetyl-alpha-neuraminate(in) + 2 Na(+)(in). With respect to regulation, both Na(+) sites regulate Neu5Ac transport. The binding energy of the second Na(+) ion may be used to allosterically stabilize the substrate without directly coordinating it. In the absence of external Na(+), the rate is reduced by 78%. Symporter that uses the Na(+) gradient as the driving force for the uptake of the sialic acid N-acetylneuraminic acid (Neu5Ac). It allows the use of host-derived Neu5Ac as an energy source by P.mirabilis. Also binds N-glycolylneuraminic acid (Neu5Gc) and ketodeoxynonulosonic acid (KDN). Shows the highest affinity for Neu5Ac and Neu5Gc, which commonly occupy the terminal non-reducing position of mammalian cell surface glycoconjugates. The polypeptide is Sodium/sialic acid symporter SiaT (Proteus mirabilis (strain HI4320)).